A 173-amino-acid polypeptide reads, in one-letter code: C-phycocyanin-2 beta subunit (173 aa).

Asn-73 carries the post-translational modification N4-methylasparagine. Cys-83 and Cys-154 together coordinate (2R,3E)-phycocyanobilin.

It belongs to the phycobiliprotein family. As to quaternary structure, heterodimer of an alpha and a beta subunit, which further assembles into trimers and the trimers into hexamers. In terms of processing, contains two covalently linked bilin chromophores.

It localises to the cellular thylakoid membrane. In terms of biological role, light-harvesting photosynthetic bile pigment-protein from the phycobiliprotein complex (phycobilisome, PBS). Phycocyanin is the major phycobiliprotein in the PBS rod. The chain is C-phycocyanin-2 beta subunit (cpcB2) from Synechococcus sp. (strain ATCC 27144 / PCC 6301 / SAUG 1402/1) (Anacystis nidulans).